The following is a 517-amino-acid chain: Glycoprotein (517 aa).

Residues 1 to 16 (MLSYLIFALAVSPILG) form the signal peptide. Topologically, residues 17–474 (KIEIVFPQHT…FSGWRSSLMG (458 aa)) are virion surface. 6 disulfide bridges follow: C40–C304, C75–C108, C84–C130, C169–C174, C193–C240, and C235–C273. Residues 53–172 (TGIPVELTMP…HFIGGRCKGQ (120 aa)) are fusion peptide. Residue N179 is glycosylated (N-linked (GlcNAc...) asparagine; by host). Residues 259–313 (DLDKTVRDLPHIKDCDLSSSIITPGEHATDISLISDVERILDYALCQNTWSKIES) form a trimerization region. An N-linked (GlcNAc...) asparagine; by host glycan is attached at N340. The interval 387 to 409 (EIGPNGVLKTKQGYKFPLHIIGT) is trimerization. The chain crosses the membrane as a helical span at residues 475–495 (VLAVIIGFVILMFLIKLIGVL). Residues 496-517 (SSLFRPKRRPIYKSDVEMAHFR) are Intravirion-facing.

It belongs to the vesiculovirus glycoprotein family. Homotrimer. Interacts with host LDL at target cell surface. Post-translationally, glycosylated by host. Palmitoylated by host.

Its subcellular location is the virion membrane. The protein resides in the host membrane. Its function is as follows. Attaches the virus to host LDL receptors, inducing clathrin-dependent endocytosis of the virion. In the endosome, the acidic pH induces conformational changes in the glycoprotein trimer, which trigger fusion between virus and endosomal membrane. The sequence is that of Glycoprotein (G) from Aedes (Bovine).